Consider the following 274-residue polypeptide: Undecaprenyl-diphosphatase (274 aa).

7 helical membrane passes run 4 to 24 (PLFV…FLPI), 41 to 61 (DATS…AVCW), 83 to 103 (FVGL…MFHS), 108 to 128 (LLFN…LILW), 184 to 204 (AAEF…VYDL), 218 to 238 (VFAI…KAFI), and 246 to 266 (FIAF…TWQL).

The protein belongs to the UppP family.

The protein localises to the cell inner membrane. It catalyses the reaction di-trans,octa-cis-undecaprenyl diphosphate + H2O = di-trans,octa-cis-undecaprenyl phosphate + phosphate + H(+). Its function is as follows. Catalyzes the dephosphorylation of undecaprenyl diphosphate (UPP). Confers resistance to bacitracin. In Aromatoleum aromaticum (strain DSM 19018 / LMG 30748 / EbN1) (Azoarcus sp. (strain EbN1)), this protein is Undecaprenyl-diphosphatase.